The primary structure comprises 147 residues: Antiholin-like protein LrgA (147 aa).

Helical transmembrane passes span 12–32 (PAHF…SKII), 35–55 (FMPI…VLLC), 74–94 (NIGL…GVIS), and 98–118 (FLII…TGYV).

This sequence belongs to the CidA/LrgA family. LrgA subfamily.

Its subcellular location is the cell membrane. Inhibits the expression or activity of extracellular murein hydrolases by interacting, possibly with LrgB, with the holin-like proteins CidA and/or CidB. The LrgAB and CidAB proteins may affect the proton motive force of the membrane. May be involved in programmed cell death (PCD), possibly triggering PCD in response to antibiotics and environmental stresses. This is Antiholin-like protein LrgA from Staphylococcus aureus (strain USA300).